The chain runs to 404 residues: Cysteine desulfurase IscS (404 aa).

Pyridoxal 5'-phosphate-binding positions include 75 to 76 (AT), asparagine 155, glutamine 183, and 203 to 205 (SAH). An N6-(pyridoxal phosphate)lysine modification is found at lysine 206. Pyridoxal 5'-phosphate is bound at residue threonine 243. Residue cysteine 328 is the Cysteine persulfide intermediate of the active site. A [2Fe-2S] cluster-binding site is contributed by cysteine 328.

This sequence belongs to the class-V pyridoxal-phosphate-dependent aminotransferase family. NifS/IscS subfamily. As to quaternary structure, homodimer. Forms a heterotetramer with IscU, interacts with other sulfur acceptors. Pyridoxal 5'-phosphate is required as a cofactor.

The protein resides in the cytoplasm. It carries out the reaction (sulfur carrier)-H + L-cysteine = (sulfur carrier)-SH + L-alanine. Its pathway is cofactor biosynthesis; iron-sulfur cluster biosynthesis. Master enzyme that delivers sulfur to a number of partners involved in Fe-S cluster assembly, tRNA modification or cofactor biosynthesis. Catalyzes the removal of elemental sulfur atoms from cysteine to produce alanine. Functions as a sulfur delivery protein for Fe-S cluster synthesis onto IscU, an Fe-S scaffold assembly protein, as well as other S acceptor proteins. The polypeptide is Cysteine desulfurase IscS (Pseudomonas fluorescens (strain SBW25)).